The primary structure comprises 80 residues: Serine rich endogenous peptide 15 (80 aa).

The first 28 residues, 1-28 (MSKEKSYVIALLLSLLLCLSFQVGVSEA), serve as a signal peptide directing secretion. 2 short sequence motifs (SCOOP motif) span residues 32 to 46 (AVTT…CANG) and 66 to 80 (PRVA…GKGP). Positions 37–80 (YSDSPRCANGSSASPPTRHCPRGRPRPPTPRVAVHSNSTKGKGP) are disordered. Short sequence motifs (sxS motif essential for MIK2 binding) lie at residues 38–40 (SDS) and 72–74 (SNS). Residues 71–80 (HSNSTKGKGP) are compositionally biased toward polar residues.

This sequence belongs to the serine rich endogenous peptide (SCOOP) phytocytokine family. In terms of assembly, interacts with MIK2 (via extracellular leucine-rich repeat domain); this interaction triggers the formation of complex between MIK2 and the BAK1/SERK3 and SERK4 coreceptors, and subsequent BAK1 activation by phosphorylation. As to expression, mostly expressed in leaves, and, to a lower extent, in seedlings shoots, roots, stems, siliques, seeds and flowers.

The protein localises to the cell membrane. Its subcellular location is the secreted. It is found in the extracellular space. It localises to the apoplast. The protein resides in the endoplasmic reticulum. The protein localises to the golgi apparatus. Functionally, brassicaceae-specific phytocytokine (plant endogenous peptide released into the apoplast) perceived by MIK2 in a BAK1/SERK3 and SERK4 coreceptors-dependent manner, that modulates various physiological and antimicrobial processes including growth prevention and reactive oxygen species (ROS) response regulation. Inhibits root growth. The protein is Serine rich endogenous peptide 15 of Arabidopsis thaliana (Mouse-ear cress).